A 98-amino-acid polypeptide reads, in one-letter code: NADH-ubiquinone oxidoreductase chain 4L (98 aa).

The next 3 helical transmembrane spans lie at 1–21 (MMSINLNLIMAFSLALAGVLI), 28–48 (STLLCLEGMMLSLFILMALLI), and 59–79 (APLVLLVFSACEAGVGLALLV).

This sequence belongs to the complex I subunit 4L family. In terms of assembly, core subunit of respiratory chain NADH dehydrogenase (Complex I) which is composed of 45 different subunits.

The protein localises to the mitochondrion inner membrane. The catalysed reaction is a ubiquinone + NADH + 5 H(+)(in) = a ubiquinol + NAD(+) + 4 H(+)(out). In terms of biological role, core subunit of the mitochondrial membrane respiratory chain NADH dehydrogenase (Complex I) which catalyzes electron transfer from NADH through the respiratory chain, using ubiquinone as an electron acceptor. Part of the enzyme membrane arm which is embedded in the lipid bilayer and involved in proton translocation. The protein is NADH-ubiquinone oxidoreductase chain 4L (MT-ND4L) of Pseudocheirus peregrinus (Common ring-tailed possum).